Here is a 373-residue protein sequence, read N- to C-terminus: UDP-glucose 4-epimerase 3 (373 aa).

27–58 lines the NAD(+) pocket; sequence SVLVTGGAGYIGTHTVLRLLEKGFAVTVVDNF. Ser153 serves as a coordination point for substrate. Tyr177 acts as the Proton acceptor in catalysis.

The protein belongs to the NAD(P)-dependent epimerase/dehydratase family. NAD(+) serves as cofactor.

It catalyses the reaction UDP-alpha-D-glucose = UDP-alpha-D-galactose. It participates in carbohydrate metabolism; galactose metabolism. In terms of biological role, catalyzes the interconversion between UDP-glucose and UDP-galactose. This Oryza sativa subsp. japonica (Rice) protein is UDP-glucose 4-epimerase 3 (UGE-3).